A 211-amino-acid polypeptide reads, in one-letter code: Guanylate kinase (211 aa).

Residues 5–184 (GLLIVFSGPS…AAERVKRIIE (180 aa)) form the Guanylate kinase-like domain. 12-19 (GPSGVGKG) lines the ATP pocket.

It belongs to the guanylate kinase family.

It localises to the cytoplasm. The catalysed reaction is GMP + ATP = GDP + ADP. Functionally, essential for recycling GMP and indirectly, cGMP. This is Guanylate kinase from Streptococcus pyogenes serotype M3 (strain SSI-1).